Reading from the N-terminus, the 337-residue chain is Equatorin (337 aa).

A signal peptide spans 1-20; the sequence is MDFILLIILSGVFLPDIISL. The Lumenal segment spans residues 21-183; that stretch reads QPIVGQEPGV…LSELEEIKLK (163 aa). The tract at residues 110–130 is disordered; it reads SKPTASGEEEKPSESSRKTST. Residues 117–126 are compositionally biased toward basic and acidic residues; the sequence is EEEKPSESSR. N145 carries N-linked (GlcNAc...) asparagine glycosylation. A helical transmembrane segment spans residues 184–204; it reads LMLGISLMTLVLLIPLLIFCF. Topologically, residues 205 to 337 are cytoplasmic; sequence ATLYKLRHLR…LLNKEGSPSN (133 aa). The disordered stretch occupies residues 259–283; it reads SSEMRRSRTRRSKSKPMDFSAGSNQ. Phosphoserine is present on S336.

As to quaternary structure, interacts with SNAP25. Post-translationally, highly N- and O-glycosylated; contains sialic acid. MN9 epitope is O-glycosylated. In terms of tissue distribution, sperm specific, including germ cells (at protein level).

It is found in the cytoplasmic vesicle. It localises to the secretory vesicle. The protein localises to the acrosome membrane. Its subcellular location is the acrosome inner membrane. The protein resides in the acrosome outer membrane. It is found in the nucleus. It localises to the cytoplasm. Functionally, acrosomal membrane-anchored protein involved in the process of fertilization and in acrosome biogenesis. The chain is Equatorin (Eqtn) from Mus musculus (Mouse).